Reading from the N-terminus, the 254-residue chain is Flavin-dependent thymidylate synthase (254 aa).

One can recognise a ThyX domain in the interval 7-237 (LRVQLIARTE…PAVFADFEIY (231 aa)). Residues Ser-71, 95 to 97 (RHR), and Gln-103 each bind FAD. DUMP contacts are provided by residues 92–95 (ELIR), 103–107 (QLSQR), and Arg-176. The short motif at 95 to 105 (RHRHFSYSQLS) is the ThyX motif element. Residues 192–194 (NYR) and His-198 contribute to the FAD site. Arg-203 is a binding site for dUMP. Arg-203 acts as the Involved in ionization of N3 of dUMP, leading to its activation in catalysis.

Belongs to the thymidylate synthase ThyX family. As to quaternary structure, homotetramer. Requires FAD as cofactor.

It catalyses the reaction dUMP + (6R)-5,10-methylene-5,6,7,8-tetrahydrofolate + NADPH + H(+) = dTMP + (6S)-5,6,7,8-tetrahydrofolate + NADP(+). It functions in the pathway pyrimidine metabolism; dTTP biosynthesis. Catalyzes the reductive methylation of 2'-deoxyuridine-5'-monophosphate (dUMP) to 2'-deoxythymidine-5'-monophosphate (dTMP) while utilizing 5,10-methylenetetrahydrofolate (mTHF) as the methyl donor, and NADPH and FADH(2) as the reductant. The sequence is that of Flavin-dependent thymidylate synthase from Mycobacterium sp. (strain KMS).